The primary structure comprises 378 residues: Erythronate-4-phosphate dehydrogenase (378 aa).

Substrate-binding residues include S45 and T66. 2 residues coordinate NAD(+): D146 and T175. The active site involves R208. D232 is an NAD(+) binding site. E237 is a catalytic residue. The active-site Proton donor is H254. G257 is a binding site for NAD(+). Y258 provides a ligand contact to substrate.

It belongs to the D-isomer specific 2-hydroxyacid dehydrogenase family. PdxB subfamily. As to quaternary structure, homodimer.

The protein resides in the cytoplasm. The enzyme catalyses 4-phospho-D-erythronate + NAD(+) = (R)-3-hydroxy-2-oxo-4-phosphooxybutanoate + NADH + H(+). It functions in the pathway cofactor biosynthesis; pyridoxine 5'-phosphate biosynthesis; pyridoxine 5'-phosphate from D-erythrose 4-phosphate: step 2/5. Its function is as follows. Catalyzes the oxidation of erythronate-4-phosphate to 3-hydroxy-2-oxo-4-phosphonooxybutanoate. This chain is Erythronate-4-phosphate dehydrogenase, found in Escherichia coli O139:H28 (strain E24377A / ETEC).